The primary structure comprises 973 residues: Leucine--tRNA ligase, chloroplastic/mitochondrial (973 aa).

Residues 126–135 carry the 'HIGH' region motif; that stretch reads PSGAGLHVGH. The 'KMSKS' region motif lies at 730 to 734; that stretch reads KMSKS. K733 is a binding site for ATP.

The protein belongs to the class-I aminoacyl-tRNA synthetase family.

The protein localises to the plastid. Its subcellular location is the chloroplast. It localises to the mitochondrion. The catalysed reaction is tRNA(Leu) + L-leucine + ATP = L-leucyl-tRNA(Leu) + AMP + diphosphate. Its function is as follows. Catalyzes the specific attachment of an amino acid to its cognate tRNA in a two step reaction: the amino acid (AA) is first activated by ATP to form AA-AMP and then transferred to the acceptor end of the tRNA. This is Leucine--tRNA ligase, chloroplastic/mitochondrial from Arabidopsis thaliana (Mouse-ear cress).